Consider the following 22-residue polypeptide: thr operon leader peptide (22 aa).

Belongs to the thr operon leader peptide family.

This protein is involved in control of the biosynthesis of threonine. This is thr operon leader peptide from Yersinia pestis bv. Antiqua (strain Antiqua).